The primary structure comprises 490 residues: Histone-lysine N-methyltransferase Smyd1 (490 aa).

Positions 7-253 (ENVEVFTSEG…EGEELTVSYI (247 aa)) constitute an SET domain. Residue 17-19 (KGR) coordinates S-adenosyl-L-methionine. Zn(2+)-binding residues include Cys52, Cys55, Cys65, Cys68, Cys74, Cys78, His86, and Cys90. Residues 52–90 (CHTCFKRQEKLHRCGQCKFAHYCDRTCQKDAWLNHKNEC) form an MYND-type zinc finger. S-adenosyl-L-methionine is bound by residues His135 and 205–206 (NH). A Zn(2+)-binding site is contributed by Cys208. An S-adenosyl-L-methionine-binding site is contributed by 270 to 272 (YYF). Positions 274, 276, and 279 each coordinate Zn(2+).

Belongs to the class V-like SAM-binding methyltransferase superfamily. Interacts with HDAC1, HDAC2 and HDAC3. Interacts (via MYND-type zinc finger) with NACA isoform skNAC. As to expression, expressed in cardiac and skeletal muscle, lymphocytes and thymus.

The protein resides in the cytoplasm. The protein localises to the nucleus. It carries out the reaction L-lysyl(4)-[histone H3] + 3 S-adenosyl-L-methionine = N(6),N(6),N(6)-trimethyl-L-lysyl(4)-[histone H3] + 3 S-adenosyl-L-homocysteine + 3 H(+). Methylates histone H3 at 'Lys-4' (H3K4me). Acts as a transcriptional repressor. Essential for cardiomyocyte differentiation and cardiac morphogenesis. The sequence is that of Histone-lysine N-methyltransferase Smyd1 (Smyd1) from Mus musculus (Mouse).